Reading from the N-terminus, the 213-residue chain is A-type ATP synthase subunit D (213 aa).

This sequence belongs to the V-ATPase D subunit family. In terms of assembly, has multiple subunits with at least A(3), B(3), C, D, E, F, H, I and proteolipid K(x).

Its subcellular location is the cell membrane. Its function is as follows. Component of the A-type ATP synthase that produces ATP from ADP in the presence of a proton gradient across the membrane. This chain is A-type ATP synthase subunit D, found in Saccharolobus solfataricus (strain ATCC 35092 / DSM 1617 / JCM 11322 / P2) (Sulfolobus solfataricus).